Reading from the N-terminus, the 614-residue chain is Dihydroxy-acid dehydratase 1 (614 aa).

D81 contacts Mg(2+). A [2Fe-2S] cluster-binding site is contributed by C122. Positions 123 and 124 each coordinate Mg(2+). K124 is modified (N6-carboxylysine). C195 is a binding site for [2Fe-2S] cluster. E491 lines the Mg(2+) pocket. Residue S517 is the Proton acceptor of the active site.

Belongs to the IlvD/Edd family. In terms of assembly, homodimer. Requires [2Fe-2S] cluster as cofactor. The cofactor is Mg(2+).

It carries out the reaction (2R)-2,3-dihydroxy-3-methylbutanoate = 3-methyl-2-oxobutanoate + H2O. It catalyses the reaction (2R,3R)-2,3-dihydroxy-3-methylpentanoate = (S)-3-methyl-2-oxopentanoate + H2O. Its pathway is amino-acid biosynthesis; L-isoleucine biosynthesis; L-isoleucine from 2-oxobutanoate: step 3/4. It participates in amino-acid biosynthesis; L-valine biosynthesis; L-valine from pyruvate: step 3/4. In terms of biological role, functions in the biosynthesis of branched-chain amino acids. Catalyzes the dehydration of (2R,3R)-2,3-dihydroxy-3-methylpentanoate (2,3-dihydroxy-3-methylvalerate) into 2-oxo-3-methylpentanoate (2-oxo-3-methylvalerate) and of (2R)-2,3-dihydroxy-3-methylbutanoate (2,3-dihydroxyisovalerate) into 2-oxo-3-methylbutanoate (2-oxoisovalerate), the penultimate precursor to L-isoleucine and L-valine, respectively. The sequence is that of Dihydroxy-acid dehydratase 1 from Mesorhizobium japonicum (strain LMG 29417 / CECT 9101 / MAFF 303099) (Mesorhizobium loti (strain MAFF 303099)).